Reading from the N-terminus, the 77-residue chain is Conotoxin Lt7.1 (77 aa).

Residues 1-19 form the signal peptide; the sequence is MEKLTILLLVAALLMSTQG. Residues 20-49 constitute a propeptide that is removed on maturation; it reads LIQSGGENRPKEKIKFLSKRKTVAESWWEG. 3 cysteine pairs are disulfide-bonded: C51–C65, C58–C69, and C64–C74.

The protein belongs to the conotoxin O2 superfamily. As to expression, expressed by the venom duct.

It localises to the secreted. This chain is Conotoxin Lt7.1, found in Conus litteratus (Lettered cone).